A 169-amino-acid chain; its full sequence is Der GTPase-activating protein YihI (169 aa).

Disordered regions lie at residues 1 to 92 (MKPS…EKPM) and 146 to 169 (SYDD…LRGN). Over residues 10–19 (SKGHAKARRK) the composition is skewed to basic residues. Residues 20 to 30 (TREELDQEARD) show a composition bias toward basic and acidic residues. The segment covering 31–40 (RKRQKKRRGH) has biased composition (basic residues). Residues 49-58 (GNTTSGSKGQ) are compositionally biased toward polar residues. Over residues 147 to 159 (YDDDEEEEEDEKQ) the composition is skewed to acidic residues. Positions 160-169 (EDMMRLLRGN) are enriched in basic and acidic residues.

Belongs to the YihI family. As to quaternary structure, interacts with Der.

In terms of biological role, a GTPase-activating protein (GAP) that modifies Der/EngA GTPase function. May play a role in ribosome biogenesis. This is Der GTPase-activating protein YihI from Escherichia coli O1:K1 / APEC.